A 486-amino-acid polypeptide reads, in one-letter code: Transcriptional adapter 2-beta (486 aa).

The ZZ-type zinc-finger motif lies at 4-59 (LGKKYCVNCLADVTNLRIRCAECQDIELCPECFSAGAEIGNHRRWHGYQQVDGGRF). Zn(2+) is bound by residues cysteine 9, cysteine 12, cysteine 23, cysteine 26, cysteine 32, cysteine 35, histidine 45, and histidine 49. The 54-residue stretch at 65 to 118 (EAEGGWTSREEQSLLDAIEQYGFGNWEDMAAHVGASRTPQEVMDHYVSMYIHGN) folds into the SANT domain. Disordered stretches follow at residues 237-291 (KKDK…EKGQ) and 343-377 (EYEA…TAGL). Gly residues-rich tracts occupy residues 247–262 (GTVG…GSGS) and 367–377 (SSGGGGGTAGL).

The protein localises to the nucleus. Its function is as follows. Transcriptional coactivator. This chain is Transcriptional adapter 2-beta (tada2b), found in Danio rerio (Zebrafish).